The following is a 451-amino-acid chain: Tubulin alpha-2 chain (451 aa).

Positions 12, 73, 142, 146, 147, 181, 208, and 230 each coordinate GTP. Residue Asp73 coordinates Mg(2+). Residue Glu256 is part of the active site.

Belongs to the tubulin family. In terms of assembly, dimer of alpha and beta chains. A typical microtubule is a hollow water-filled tube with an outer diameter of 25 nm and an inner diameter of 15 nM. Alpha-beta heterodimers associate head-to-tail to form protofilaments running lengthwise along the microtubule wall with the beta-tubulin subunit facing the microtubule plus end conferring a structural polarity. Microtubules usually have 13 protofilaments but different protofilament numbers can be found in some organisms and specialized cells. Requires Mg(2+) as cofactor.

It is found in the cytoplasm. The protein resides in the cytoskeleton. The enzyme catalyses GTP + H2O = GDP + phosphate + H(+). Tubulin is the major constituent of microtubules, a cylinder consisting of laterally associated linear protofilaments composed of alpha- and beta-tubulin heterodimers. Microtubules grow by the addition of GTP-tubulin dimers to the microtubule end, where a stabilizing cap forms. Below the cap, tubulin dimers are in GDP-bound state, owing to GTPase activity of alpha-tubulin. The polypeptide is Tubulin alpha-2 chain (tubB) (Emericella nidulans (strain FGSC A4 / ATCC 38163 / CBS 112.46 / NRRL 194 / M139) (Aspergillus nidulans)).